Here is a 337-residue protein sequence, read N- to C-terminus: MLELAYLQTLPQQRALLKADYADFIVKEDLGYAMTGEGEFVALYVRKTDANTLFVGEQLAKFVGLSPRNMGYAGLKDRKAVTEQWFCLQMPGKAMPDFSRFNMAGVEILQVTRHSRKIRTGSLNGNHFEILLRNAVETDELKVRLENIKNFGFPNYFTEQRFGKDGHNLTQAMRWANGEIKVKDRKKRSFYLSAARSEVFNLVVSERIRQGLANQVLAHDILQLAGTHSWFTADGKEDLALLQTRLENHDLQLTAPLIGETQQLACELENKLVERHQSLISLMKRERMKPARRPLLMQARDFHWEFVENGLKLKFYLPAGSYATALVRELVNIDENE.

Asp-77 (nucleophile) is an active-site residue. The 157-residue stretch at 152 to 308 folds into the TRUD domain; the sequence is GFPNYFTEQR…ARDFHWEFVE (157 aa).

It belongs to the pseudouridine synthase TruD family.

The enzyme catalyses uridine(13) in tRNA = pseudouridine(13) in tRNA. Responsible for synthesis of pseudouridine from uracil-13 in transfer RNAs. The protein is tRNA pseudouridine synthase D of Mannheimia succiniciproducens (strain KCTC 0769BP / MBEL55E).